A 390-amino-acid chain; its full sequence is Stearoyl-[acyl-carrier-protein] 9-desaturase 5, chloroplastic (390 aa).

Residues 1 to 22 (MAFAASHTASPSSCGGVAQRRS) form a disordered region. The transit peptide at 1 to 31 (MAFAASHTASPSSCGGVAQRRSNGMSPVVAM) directs the protein to the chloroplast. Residues E132, E170, H173, E223, E256, and H259 each contribute to the Fe cation site.

It belongs to the fatty acid desaturase type 2 family. In terms of assembly, homodimer. It depends on Fe(2+) as a cofactor.

It is found in the plastid. The protein localises to the chloroplast. The enzyme catalyses octadecanoyl-[ACP] + 2 reduced [2Fe-2S]-[ferredoxin] + O2 + 2 H(+) = (9Z)-octadecenoyl-[ACP] + 2 oxidized [2Fe-2S]-[ferredoxin] + 2 H2O. It functions in the pathway lipid metabolism; fatty acid metabolism. Converts stearoyl-ACP to oleoyl-ACP by introduction of a cis double bond between carbons 9 and 10 of the acyl chain. In Oryza sativa subsp. japonica (Rice), this protein is Stearoyl-[acyl-carrier-protein] 9-desaturase 5, chloroplastic.